The chain runs to 513 residues: L-threonine dehydratase biosynthetic IlvA (513 aa).

Residue Lys-63 is modified to N6-(pyridoxal phosphate)lysine. Pyridoxal 5'-phosphate is bound by residues Asn-90, 189–193, and Ser-316; that span reads GGGGL. ACT-like domains lie at 340 to 411 and 433 to 504; these read ALLA…DMSD and RLYT…DVTK.

It belongs to the serine/threonine dehydratase family. As to quaternary structure, homotetramer. Requires pyridoxal 5'-phosphate as cofactor.

It catalyses the reaction L-threonine = 2-oxobutanoate + NH4(+). Its pathway is amino-acid biosynthesis; L-isoleucine biosynthesis; 2-oxobutanoate from L-threonine: step 1/1. Catalyzes the anaerobic formation of alpha-ketobutyrate and ammonia from threonine in a two-step reaction. The first step involved a dehydration of threonine and a production of enamine intermediates (aminocrotonate), which tautomerizes to its imine form (iminobutyrate). Both intermediates are unstable and short-lived. The second step is the nonenzymatic hydrolysis of the enamine/imine intermediates to form 2-ketobutyrate and free ammonia. In the low water environment of the cell, the second step is accelerated by RidA. This Haemophilus influenzae (strain ATCC 51907 / DSM 11121 / KW20 / Rd) protein is L-threonine dehydratase biosynthetic IlvA (ilvA).